We begin with the raw amino-acid sequence, 1865 residues long: Dedicator of cytokinesis protein 1 (1865 aa).

In terms of domain architecture, SH3 spans 9–70 (REEKYGVAFY…PASYIHLKEA (62 aa)). Residues 425–609 (RNDIYVTLVQ…DSFQISTLVC (185 aa)) enclose the C2 DOCK-type domain. The 411-residue stretch at 1207–1617 (YKEIEREEMY…VEKEYGVRIM (411 aa)) folds into the DOCKER domain. 2 disordered regions span residues 1619–1716 (SSLD…EFKP) and 1732–1865 (TISP…GIVQ). Over residues 1639-1666 (PSSSRPLSVASVSSLSSDSTPSRPGSDG) the composition is skewed to low complexity. Basic and acidic residues predominate over residues 1680 to 1694 (RSQDKLDKDDLEKEK). A Phosphoserine modification is found at Ser1681. Residues 1687–1695 (KDDLEKEKK) form a phosphoinositide-binding region. Residues 1695–1704 (KDKKKEKRNS) are compositionally biased toward basic residues. Residues 1705-1716 (KHQEIFEKEFKP) are compositionally biased toward basic and acidic residues. Phosphoserine occurs at positions 1743, 1751, 1756, 1761, and 1764. Low complexity predominate over residues 1756–1766 (SVSPSSPSSQQ). A phosphothreonine mark is found at Thr1767 and Thr1772. The interval 1793–1819 (ADVADVPPPLPLKGSVADYGNLMENQD) is interaction with NCK2 second and third SH3 domain (minor). An SH3-binding; interaction with CRK motif is present at residues 1799–1805 (PPPLPLK). The segment at 1820 to 1836 (LLGSPTPPPPPPHQRHL) is interaction with NCK2 third SH3 domain (major). Residues 1824–1851 (PTPPPPPPHQRHLPPPLPSKTPPPPPPK) are compositionally biased toward pro residues. The tract at residues 1837-1852 (PPPLPSKTPPPPPPKT) is interaction with NCK2 (minor). An SH3-binding; interaction with CRK motif is present at residues 1838–1843 (PPLPSK). Residues 1855-1865 (KQASVDSGIVQ) show a composition bias toward polar residues. Residue Ser1858 is modified to Phosphoserine.

It belongs to the DOCK family. As to quaternary structure, interacts with the SH3 domains of CRK and NCK2 via multiple sites. Interacts with nucleotide-free RAC1 via its DOCKER domain. Interacts with ELMO1, ELMO2 and probably ELMO3 via its SH3 domain. Interacts with ADGRB1. Identified in a complex with AUTS2 and ELMO2. As to expression, highly expressed in placenta, lung, kidney, pancreas and ovary. Expressed at intermediate level in thymus, testes and colon.

It is found in the cytoplasm. It localises to the membrane. Involved in cytoskeletal rearrangements required for phagocytosis of apoptotic cells and cell motility. Along with DOCK1, mediates CRK/CRKL regulation of epithelial and endothelial cell spreading and migration on type IV collagen. Functions as a guanine nucleotide exchange factor (GEF), which activates Rac Rho small GTPases by exchanging bound GDP for free GTP. Its GEF activity may be enhanced by ELMO1. This is Dedicator of cytokinesis protein 1 (DOCK1) from Homo sapiens (Human).